The primary structure comprises 407 residues: Imidazolonepropionase (407 aa).

The Fe(3+) site is built by histidine 68 and histidine 70. Residues histidine 68 and histidine 70 each contribute to the Zn(2+) site. 4-imidazolone-5-propanoate-binding residues include arginine 77, tyrosine 140, and histidine 173. Tyrosine 140 contacts N-formimidoyl-L-glutamate. Residue histidine 236 coordinates Fe(3+). Histidine 236 lines the Zn(2+) pocket. 4-imidazolone-5-propanoate is bound at residue glutamine 239. Aspartate 311 serves as a coordination point for Fe(3+). Aspartate 311 lines the Zn(2+) pocket. Residues asparagine 313 and glycine 315 each coordinate N-formimidoyl-L-glutamate. Threonine 316 lines the 4-imidazolone-5-propanoate pocket.

This sequence belongs to the metallo-dependent hydrolases superfamily. HutI family. Zn(2+) is required as a cofactor. Requires Fe(3+) as cofactor.

The protein resides in the cytoplasm. The enzyme catalyses 4-imidazolone-5-propanoate + H2O = N-formimidoyl-L-glutamate. It functions in the pathway amino-acid degradation; L-histidine degradation into L-glutamate; N-formimidoyl-L-glutamate from L-histidine: step 3/3. Functionally, catalyzes the hydrolytic cleavage of the carbon-nitrogen bond in imidazolone-5-propanoate to yield N-formimidoyl-L-glutamate. It is the third step in the universal histidine degradation pathway. This Stenotrophomonas maltophilia (strain R551-3) protein is Imidazolonepropionase.